Consider the following 949-residue polypeptide: MAM domain-containing glycosylphosphatidylinositol anchor protein 2 (949 aa).

Positions 1–25 are cleaved as a signal peptide; the sequence is MDLVYGLVWLLTVLLEGISGQGVYA. Ig-like domains lie at 27-127 and 134-232; these read PTVR…IRVD and PVVT…KMVS. 2 cysteine pairs are disulfide-bonded: Cys-62/Cys-110 and Cys-159/Cys-216. Residues Asn-92, Asn-213, and Asn-237 are each glycosylated (N-linked (GlcNAc...) asparagine). Ig-like domains lie at 242–328, 340–436, 442–533, and 540–627; these read PSIK…NIIV, PDPY…VNIS, PNLT…ALVQ, and PAVE…FLVT. 2 disulfide bridges follow: Cys-264–Cys-310 and Cys-359–Cys-417. 5 N-linked (GlcNAc...) asparagine glycosylation sites follow: Asn-434, Asn-443, Asn-504, Asn-610, and Asn-703. Intrachain disulfides connect Cys-465–Cys-515 and Cys-561–Cys-611. Residues 638 to 738 form the Fibronectin type-III domain; the sequence is DTYNPVWQNR…TIRVIKYTGE (101 aa). An MAM domain is found at 739 to 914; that stretch reads FHCGFEDGNI…VSIAEGECAK (176 aa). Asp-924 is lipidated: GPI-anchor amidated aspartate. A propeptide spans 925–949 (removed in mature form); the sequence is GAVGILVHIWLFPVIILISILSPRR.

Interacts (through the Ig-like domains) with NLGN2. As to expression, expressed predominantly in neuronal tissue. Expressed in brain.

The protein resides in the cell membrane. In terms of biological role, may be involved in cell-cell interactions. In Rattus norvegicus (Rat), this protein is MAM domain-containing glycosylphosphatidylinositol anchor protein 2 (Mdga2).